A 95-amino-acid polypeptide reads, in one-letter code: Co-chaperonin GroES (95 aa).

It belongs to the GroES chaperonin family. As to quaternary structure, heptamer of 7 subunits arranged in a ring. Interacts with the chaperonin GroEL.

Its subcellular location is the cytoplasm. Its function is as follows. Together with the chaperonin GroEL, plays an essential role in assisting protein folding. The GroEL-GroES system forms a nano-cage that allows encapsulation of the non-native substrate proteins and provides a physical environment optimized to promote and accelerate protein folding. GroES binds to the apical surface of the GroEL ring, thereby capping the opening of the GroEL channel. This Rickettsia canadensis (strain McKiel) protein is Co-chaperonin GroES.